We begin with the raw amino-acid sequence, 355 residues long: Protein RecA (355 aa).

Position 65–72 (65–72 (GPESSGKT)) interacts with ATP. Residues 333–355 (IEEKDEKQAEAEKNENTNLFDEE) form a disordered region. The span at 336–347 (KDEKQAEAEKNE) shows a compositional bias: basic and acidic residues.

It belongs to the RecA family.

It is found in the cytoplasm. Its function is as follows. Can catalyze the hydrolysis of ATP in the presence of single-stranded DNA, the ATP-dependent uptake of single-stranded DNA by duplex DNA, and the ATP-dependent hybridization of homologous single-stranded DNAs. It interacts with LexA causing its activation and leading to its autocatalytic cleavage. In Staphylococcus carnosus (strain TM300), this protein is Protein RecA.